A 439-amino-acid chain; its full sequence is Xylose isomerase (439 aa).

Active-site residues include histidine 101 and aspartate 104. Positions 232, 268, 271, 296, 307, 309, and 339 each coordinate Mg(2+).

It belongs to the xylose isomerase family. Homotetramer. The cofactor is Mg(2+).

The protein localises to the cytoplasm. The enzyme catalyses alpha-D-xylose = alpha-D-xylulofuranose. This Pectobacterium atrosepticum (strain SCRI 1043 / ATCC BAA-672) (Erwinia carotovora subsp. atroseptica) protein is Xylose isomerase.